Reading from the N-terminus, the 277-residue chain is NH(3)-dependent NAD(+) synthetase (277 aa).

Residue 36 to 43 (GLSGGIDS) participates in ATP binding. Aspartate 42 is a Mg(2+) binding site. Arginine 118 lines the deamido-NAD(+) pocket. Threonine 138 contacts ATP. Glutamate 143 provides a ligand contact to Mg(2+). Residues lysine 167 and serine 189 each contribute to the ATP site.

The protein belongs to the NAD synthetase family. Homodimer.

It carries out the reaction deamido-NAD(+) + NH4(+) + ATP = AMP + diphosphate + NAD(+) + H(+). It functions in the pathway cofactor biosynthesis; NAD(+) biosynthesis; NAD(+) from deamido-NAD(+) (ammonia route): step 1/1. Catalyzes the ATP-dependent amidation of deamido-NAD to form NAD. Uses ammonia as a nitrogen source. The protein is NH(3)-dependent NAD(+) synthetase of Chlorobium phaeovibrioides (strain DSM 265 / 1930) (Prosthecochloris vibrioformis (strain DSM 265)).